We begin with the raw amino-acid sequence, 385 residues long: Benzoate O-methyltransferase (385 aa).

Residue tyrosine 18 coordinates S-adenosyl-L-homocysteine. Glutamine 25 contacts benzoate. Residues cysteine 59, asparagine 64, aspartate 106, leucine 107, serine 145, and tyrosine 146 each contribute to the S-adenosyl-L-homocysteine site. Tryptophan 167 lines the benzoate pocket. Mg(2+)-binding residues include asparagine 184, glutamate 270, phenylalanine 272, and asparagine 273.

This sequence belongs to the methyltransferase superfamily. Type-7 methyltransferase family. SABATH subfamily. It depends on Mg(2+) as a cofactor.

It carries out the reaction benzoate + S-adenosyl-L-methionine = methyl benzoate + S-adenosyl-L-homocysteine. Its function is as follows. Methyltransferase involved in the biosynthesis of methyl benzoate in response to stresses. Utilizes exclusively benzoic acid (BA) as substrate. The polypeptide is Benzoate O-methyltransferase (OMT8) (Zea mays (Maize)).